A 498-amino-acid chain; its full sequence is MSPQTETKASVGFKAGVKDYKLTYYTPDYETKDTDILAAFRVTPQPGVPPEEAGAAVAAESSTGTWTTVWTDGLTSLDRYKGRCYRIERVIGEKDQYIAYVAYPLDLFEEGSVTNLFTSIVGNVFGFKALRALRLEDLRIPPAYTKTFQGPPHGIQVERDKLNKYGRPLLGCTIKPKLGLSAKNYGRAVYECLRGGLDFTKDDENVNSQPFMRWRDRFLFCAEAIYKSQAETGEIKGHYLNATAGTCEEMLKRAFFARELGVPIIMHDYLTGGFTANTSLAHYCRENGLLLHIHRAMHAVIDRQKNHGIHFRVLAKALRLSGGDHIHSGTVVGKLEGEREITLGFVDLLRDDFVEQDRSRGIYFTQDWVSLPGVMPVASGGIHVWHMPALTEIFGDDSVLQFGGGTLGHPWGNAPGAVANRVALEACVQARNEGRDLAQEGNDIIRQAGKWSPELAAACEVWKEIRFDFKPVDTLDPNDKKQRDNEDTLADKFFGDKG.

Positions 1–2 (MS) are excised as a propeptide. An N-acetylproline modification is found at Pro-3. The residue at position 14 (Lys-14) is an N6,N6,N6-trimethyllysine. Residues Asn-123 and Thr-173 each contribute to the substrate site. The active-site Proton acceptor is Lys-175. Position 177 (Lys-177) interacts with substrate. Residues Lys-201, Asp-203, and Glu-204 each contribute to the Mg(2+) site. Lys-201 is modified (N6-carboxylysine). His-294 acts as the Proton acceptor in catalysis. Residues Arg-295, His-327, and Ser-379 each contribute to the substrate site. The tract at residues 473–498 (DTLDPNDKKQRDNEDTLADKFFGDKG) is disordered.

Belongs to the RuBisCO large chain family. Type I subfamily. Heterohexadecamer of 8 large chains and 8 small chains; disulfide-linked. The disulfide link is formed within the large subunit homodimers. Mg(2+) serves as cofactor. In terms of processing, the disulfide bond which can form in the large chain dimeric partners within the hexadecamer appears to be associated with oxidative stress and protein turnover.

Its subcellular location is the plastid. The catalysed reaction is 2 (2R)-3-phosphoglycerate + 2 H(+) = D-ribulose 1,5-bisphosphate + CO2 + H2O. The enzyme catalyses D-ribulose 1,5-bisphosphate + O2 = 2-phosphoglycolate + (2R)-3-phosphoglycerate + 2 H(+). Functionally, ruBisCO catalyzes two reactions: the carboxylation of D-ribulose 1,5-bisphosphate, the primary event in carbon dioxide fixation, as well as the oxidative fragmentation of the pentose substrate in the photorespiration process. Both reactions occur simultaneously and in competition at the same active site. This Cuscuta exaltata (Tall dodder) protein is Ribulose bisphosphate carboxylase large chain.